The sequence spans 100 residues: Small ribosomal subunit protein uS14 (100 aa).

This sequence belongs to the universal ribosomal protein uS14 family. In terms of assembly, part of the 30S ribosomal subunit. Contacts proteins S3 and S10.

Binds 16S rRNA, required for the assembly of 30S particles and may also be responsible for determining the conformation of the 16S rRNA at the A site. The polypeptide is Small ribosomal subunit protein uS14 (Microcystis aeruginosa (strain NIES-843 / IAM M-2473)).